The primary structure comprises 398 residues: MTNRVVLAYSGGLDTSVAIPYLSKMTDGEVVAVSIDLGQGGEDMESVRQRALACGAVEAIVVDAKDEFAEQYCLPAIKANGLYMKQYPLVSALSRPLIVKHLVETAKEHGGTHVAHGCTGKGNDQVRFEVGFADTAPDLKIIAPARDYAWTRDKAIAFAEEIDLPIEQSASSPFSIDQNVWGRAVETGFLEDLWNPPTKDLYAYTEEPSLGNAPDEVVISFEGGKPVAIDGRPVSVLEAIEEMNRRGGAQGVGRLDMVEDRLVGIKSREVYEAPGAMVLIRAHEALEDITVERELARYKRGIDARWSEEVYDGLWFAPLKRSLDAFIDSTQENVTGDIRLVLHEGRITVNGRRSEKSLYDFNLATYDTGDTFDQTLSRGFVELHGLSSKIACKRDREQ.

8–16 contacts ATP; the sequence is AYSGGLDTS. Tyr-87 provides a ligand contact to L-citrulline. Residue Gly-117 participates in ATP binding. Residues Thr-119, Asn-123, and Asp-124 each contribute to the L-aspartate site. Asn-123 lines the L-citrulline pocket. L-citrulline contacts are provided by Arg-127, Ser-175, Glu-259, and Tyr-271.

It belongs to the argininosuccinate synthase family. Type 1 subfamily. Homotetramer.

It localises to the cytoplasm. The catalysed reaction is L-citrulline + L-aspartate + ATP = 2-(N(omega)-L-arginino)succinate + AMP + diphosphate + H(+). It participates in amino-acid biosynthesis; L-arginine biosynthesis; L-arginine from L-ornithine and carbamoyl phosphate: step 2/3. The chain is Argininosuccinate synthase from Corynebacterium kroppenstedtii (strain DSM 44385 / JCM 11950 / CIP 105744 / CCUG 35717).